The sequence spans 350 residues: Chorismate synthase (350 aa).

Residues Arg39 and Arg45 each contribute to the NADP(+) site. Residues 85–104 (KDKKVPPVTRPRPGHADLPG) form a disordered region. Residues 119-121 (RAS), 213-214 (QG), Gly258, 273-277 (KPIPT), and Arg299 contribute to the FMN site.

It belongs to the chorismate synthase family. As to quaternary structure, homotetramer. It depends on FMNH2 as a cofactor.

It catalyses the reaction 5-O-(1-carboxyvinyl)-3-phosphoshikimate = chorismate + phosphate. It functions in the pathway metabolic intermediate biosynthesis; chorismate biosynthesis; chorismate from D-erythrose 4-phosphate and phosphoenolpyruvate: step 7/7. In terms of biological role, catalyzes the anti-1,4-elimination of the C-3 phosphate and the C-6 proR hydrogen from 5-enolpyruvylshikimate-3-phosphate (EPSP) to yield chorismate, which is the branch point compound that serves as the starting substrate for the three terminal pathways of aromatic amino acid biosynthesis. This reaction introduces a second double bond into the aromatic ring system. This is Chorismate synthase from Caldanaerobacter subterraneus subsp. tengcongensis (strain DSM 15242 / JCM 11007 / NBRC 100824 / MB4) (Thermoanaerobacter tengcongensis).